A 113-amino-acid polypeptide reads, in one-letter code: Dolichyl-diphosphooligosaccharide--protein glycosyltransferase subunit DAD1 (113 aa).

S2 bears the N-acetylserine mark. At 2 to 30 the chain is on the cytoplasmic side; the sequence is SASVLSVISRFLEEYLSATPQRLKLLDAY. A helical membrane pass occupies residues 31-51; it reads LLYILLTGALQFGYCLLVGTF. A topological domain (lumenal) is located at residue P52. The helical transmembrane segment at 53 to 73 threads the bilayer; it reads FNSFLSGFISCVGSFILAVCL. Residues 74-92 lie on the Cytoplasmic side of the membrane; that stretch reads RIQINPQNKADFQGISPER. Residues 93–113 form a helical membrane-spanning segment; the sequence is AFADFLFASTILHLVVMNFVG.

The protein belongs to the DAD/OST2 family. As to quaternary structure, component of the oligosaccharyltransferase (OST) complex. OST exists in two different complex forms which contain common core subunits RPN1, RPN2, OST48, OST4, DAD1 and TMEM258, either STT3A or STT3B as catalytic subunits, and form-specific accessory subunits. STT3A complex assembly occurs through the formation of 3 subcomplexes. Subcomplex 1 contains RPN1 and TMEM258, subcomplex 2 contains the STT3A-specific subunits STT3A, DC2/OSTC, and KCP2 as well as the core subunit OST4, and subcomplex 3 contains RPN2, DAD1, and OST48. The STT3A complex can form stable complexes with the Sec61 complex or with both the Sec61 and TRAP complexes.

It localises to the endoplasmic reticulum membrane. Its pathway is protein modification; protein glycosylation. Functionally, subunit of the oligosaccharyl transferase (OST) complex that catalyzes the initial transfer of a defined glycan (Glc(3)Man(9)GlcNAc(2) in eukaryotes) from the lipid carrier dolichol-pyrophosphate to an asparagine residue within an Asn-X-Ser/Thr consensus motif in nascent polypeptide chains, the first step in protein N-glycosylation. N-glycosylation occurs cotranslationally and the complex associates with the Sec61 complex at the channel-forming translocon complex that mediates protein translocation across the endoplasmic reticulum (ER). All subunits are required for a maximal enzyme activity. The sequence is that of Dolichyl-diphosphooligosaccharide--protein glycosyltransferase subunit DAD1 from Bos taurus (Bovine).